The following is a 37-amino-acid chain: Large ribosomal subunit protein bL36 (37 aa).

The protein belongs to the bacterial ribosomal protein bL36 family.

This chain is Large ribosomal subunit protein bL36, found in Prochlorococcus marinus (strain MIT 9303).